A 294-amino-acid chain; its full sequence is DNA replication complex GINS protein SLD5 (294 aa).

It belongs to the GINS4/SLD5 family. As to quaternary structure, component of the GINS complex which is a heterotetramer composed of SLD5, PSF1, PSF2 and PSF3. Interacts with PSF2.

It is found in the nucleus. Required for DNA replication. Functions as part of the GINS complex which plays an essential role in the initiation of DNA replication by binding to DNA replication origins and facilitating the assembly of the DNA replication machinery. The protein is DNA replication complex GINS protein SLD5 of Saccharomyces cerevisiae (strain ATCC 204508 / S288c) (Baker's yeast).